Reading from the N-terminus, the 337-residue chain is F420-dependent glucose-6-phosphate dehydrogenase (337 aa).

Aspartate 44 lines the coenzyme F420-(gamma-Glu)n pocket. The active-site Proton donor is histidine 45. Coenzyme F420-(gamma-Glu)n-binding positions include threonine 81 and 112–113 (TG). Glutamate 114 functions as the Proton acceptor in the catalytic mechanism. Residues asparagine 117, 180–181 (GG), and 183–184 (GV) each bind coenzyme F420-(gamma-Glu)n. Substrate contacts are provided by threonine 198, lysine 201, lysine 262, and arginine 286.

The protein belongs to the F420-dependent glucose-6-phosphate dehydrogenase family. In terms of assembly, homodimer.

The enzyme catalyses oxidized coenzyme F420-(gamma-L-Glu)(n) + D-glucose 6-phosphate + H(+) = 6-phospho-D-glucono-1,5-lactone + reduced coenzyme F420-(gamma-L-Glu)(n). Functionally, catalyzes the coenzyme F420-dependent oxidation of glucose 6-phosphate (G6P) to 6-phosphogluconolactone. The sequence is that of F420-dependent glucose-6-phosphate dehydrogenase from Kineococcus radiotolerans (strain ATCC BAA-149 / DSM 14245 / SRS30216).